A 199-amino-acid polypeptide reads, in one-letter code: Recombination protein RecR (199 aa).

A C4-type zinc finger spans residues 57–72 (CQSCRTFTEQDLCPIC). A Toprim domain is found at 81-176 (GIICVVETPA…VISRIAHGVP (96 aa)).

This sequence belongs to the RecR family.

Functionally, may play a role in DNA repair. It seems to be involved in an RecBC-independent recombinational process of DNA repair. It may act with RecF and RecO. The protein is Recombination protein RecR of Shewanella frigidimarina (strain NCIMB 400).